Here is a 60-residue protein sequence, read N- to C-terminus: Potassium channel toxin alpha-KTx 3.16 (60 aa).

A signal peptide spans M1–G23. Disulfide bonds link C30/C50, C36/C55, and C40/C57.

The protein belongs to the short scorpion toxin superfamily. Potassium channel inhibitor family. Alpha-KTx 03 subfamily. As to expression, expressed by the venom gland.

Its subcellular location is the secreted. In terms of biological role, potassium channel inhibitor. This is Potassium channel toxin alpha-KTx 3.16 from Mesobuthus gibbosus (Mediterranean checkered scorpion).